Consider the following 929-residue polypeptide: uncharacterized protein (929 aa).

The segment at 1-257 is disordered; the sequence is MARKGKVNTL…SVLSSDDNDS (257 aa). Residues 23–34 are compositionally biased toward basic and acidic residues; sequence KQLENKILHSYE. 5 stretches are compositionally biased toward acidic residues: residues 35–50, 59–75, 107–117, 133–144, and 188–220; these read EESA…DNDE, SEDD…DEED, LNEEDDSDDSV, DENELVDLDTLL, and SESE…DGEN. Phosphoserine occurs at positions 251, 555, and 557. Positions 602–729 are disordered; the sequence is DEMQAFEDEL…KADKKNHKLK (128 aa). A compositionally biased stretch (acidic residues) spans 605 to 619; it reads QAFEDELAGVPNEDD. The span at 670–681 shows a compositional bias: basic and acidic residues; it reads NKPEMKEGQKKA. The segment covering 696 to 711 has biased composition (polar residues); the sequence is ETNPWLQVPDQRTSSA. The segment covering 712–729 has biased composition (basic and acidic residues); that stretch reads KKLDKNSSKADKKNHKLK. A phosphoserine mark is found at Ser-758, Ser-760, and Ser-764. Residues 805 to 820 are compositionally biased toward basic and acidic residues; the sequence is KEDWVQEDAPKEEDHS. Residues 805–843 form a disordered region; sequence KEDWVQEDAPKEEDHSLPGWGSWGGVGVKQRKTKPKVKK. Basic residues predominate over residues 833-843; sequence KQRKTKPKVKK.

The protein to yeast YML093w.

It localises to the nucleus. The protein localises to the nucleolus. This is an uncharacterized protein from Schizosaccharomyces pombe (strain 972 / ATCC 24843) (Fission yeast).